A 70-amino-acid polypeptide reads, in one-letter code: Cold shock-like protein CspH (70 aa).

One can recognise a CSD domain in the interval 7–67 (GIVKTFDRKS…GLRGPTAANV (61 aa)).

The protein localises to the cytoplasm. This is Cold shock-like protein CspH (cspH) from Escherichia coli O6:H1 (strain CFT073 / ATCC 700928 / UPEC).